A 649-amino-acid chain; its full sequence is DNA mismatch repair protein MutL (649 aa).

Belongs to the DNA mismatch repair MutL/HexB family.

Its function is as follows. This protein is involved in the repair of mismatches in DNA. It is required for dam-dependent methyl-directed DNA mismatch repair. May act as a 'molecular matchmaker', a protein that promotes the formation of a stable complex between two or more DNA-binding proteins in an ATP-dependent manner without itself being part of a final effector complex. This Streptococcus pneumoniae serotype 2 (strain D39 / NCTC 7466) protein is DNA mismatch repair protein MutL.